The sequence spans 173 residues: Adenine phosphoribosyltransferase (173 aa).

Belongs to the purine/pyrimidine phosphoribosyltransferase family. Homodimer.

It is found in the cytoplasm. It carries out the reaction AMP + diphosphate = 5-phospho-alpha-D-ribose 1-diphosphate + adenine. It participates in purine metabolism; AMP biosynthesis via salvage pathway; AMP from adenine: step 1/1. Functionally, catalyzes a salvage reaction resulting in the formation of AMP, that is energically less costly than de novo synthesis. The polypeptide is Adenine phosphoribosyltransferase (Thermoanaerobacter pseudethanolicus (strain ATCC 33223 / 39E) (Clostridium thermohydrosulfuricum)).